Consider the following 602-residue polypeptide: Elongation factor 4 (602 aa).

The 183-residue stretch at 7–189 (KHIRNFSIVA…AIVDKIPSPQ (183 aa)) folds into the tr-type G domain. GTP contacts are provided by residues 19-24 (DHGKST) and 136-139 (NKID).

It belongs to the TRAFAC class translation factor GTPase superfamily. Classic translation factor GTPase family. LepA subfamily.

The protein resides in the cell membrane. The enzyme catalyses GTP + H2O = GDP + phosphate + H(+). Its function is as follows. Required for accurate and efficient protein synthesis under certain stress conditions. May act as a fidelity factor of the translation reaction, by catalyzing a one-codon backward translocation of tRNAs on improperly translocated ribosomes. Back-translocation proceeds from a post-translocation (POST) complex to a pre-translocation (PRE) complex, thus giving elongation factor G a second chance to translocate the tRNAs correctly. Binds to ribosomes in a GTP-dependent manner. The sequence is that of Elongation factor 4 from Clostridium kluyveri (strain ATCC 8527 / DSM 555 / NBRC 12016 / NCIMB 10680 / K1).